Reading from the N-terminus, the 745-residue chain is Copper-transporting ATPase (745 aa).

Residues 1–67 enclose the HMA domain; the sequence is MKESFYIEGM…LIEKLGYSPK (67 aa). Residues 1-83 lie on the Cytoplasmic side of the membrane; it reads MKESFYIEGM…KKEFFSPNVK (83 aa). Cysteine 12 and cysteine 15 together coordinate Cu cation. The helical transmembrane segment at 84–104 threads the bilayer; it reads LALAVIFTLFVVYLSMGAMLS. At 105–124 the chain is on the extracellular side; sequence PSLLPKSLLAIDNHSNFLNA. Residues 125 to 144 form a helical membrane-spanning segment; it reads CLQLIGTLIVMHWGRDFYIQ. Residues 145–151 are Cytoplasmic-facing; that stretch reads GFKALWH. The chain crosses the membrane as a helical span at residues 152–172; that stretch reads RQPNMSSLIAIGTSAALISSL. At 173 to 194 the chain is on the extracellular side; the sequence is WQLYLVYTDHYTDQWSYGHYYF. Residues 195–215 traverse the membrane as a helical segment; sequence ESVCVILMFVMVGKRIENVSK. At 216-343 the chain is on the cytoplasmic side; that stretch reads DKALDAMQAL…KAEISRLADK (128 aa). A helical transmembrane segment spans residues 344 to 366; the sequence is VSSVFVPSVIAIAILAFVVWLII. Topologically, residues 367-379 are extracellular; sequence APKPDFWWNFGIA. Residues 380 to 397 traverse the membrane as a helical segment; sequence LEVFVSVLVISCPCALGL. The Cytoplasmic segment spans residues 398 to 685; it reads ATLMSILVAN…KLSQATIKNI (288 aa). The active-site 4-aspartylphosphate intermediate is aspartate 435. Residues aspartate 631 and aspartate 635 each coordinate Mg(2+). Residues 686–705 traverse the membrane as a helical segment; the sequence is KENLFWAFCYNSVFIPLACG. The Extracellular segment spans residues 706–716; the sequence is VLYKANIMLSP. A helical transmembrane segment spans residues 717 to 735; sequence AIAGLAMSLSSVSVVLNSQ. At 736 to 745 the chain is on the cytoplasmic side; sequence RLRNFKIKDH.

It belongs to the cation transport ATPase (P-type) (TC 3.A.3) family. Type IB subfamily.

The protein localises to the cell membrane. It catalyses the reaction Cu(2+)(in) + ATP + H2O = Cu(2+)(out) + ADP + phosphate + H(+). In terms of biological role, probably involved in copper export. The protein is Copper-transporting ATPase (copA) of Helicobacter pylori (Campylobacter pylori).